An 89-amino-acid polypeptide reads, in one-letter code: Small ribosomal subunit protein uS14 (89 aa).

This sequence belongs to the universal ribosomal protein uS14 family. Part of the 30S ribosomal subunit. Contacts proteins S3 and S10.

Functionally, binds 16S rRNA, required for the assembly of 30S particles and may also be responsible for determining the conformation of the 16S rRNA at the A site. The sequence is that of Small ribosomal subunit protein uS14 from Latilactobacillus sakei subsp. sakei (strain 23K) (Lactobacillus sakei subsp. sakei).